Reading from the N-terminus, the 170-residue chain is Neurotensin/neuromedin N (170 aa).

An N-terminal signal peptide occupies residues 1–23 (MMAGMKIQLVCMLLLAFSSWSLC). Pyrrolidone carboxylic acid is present on glutamine 151.

The protein belongs to the neurotensin family. In terms of assembly, interacts with NTSR1. Interacts with SORT1. Interacts with SORL1. Post-translationally, neurotensin is cleaved and degraded by Angiotensin-converting enzyme (ACE) and neprilysin (MME).

The protein localises to the secreted. Its subcellular location is the cytoplasmic vesicle. It localises to the secretory vesicle. Neurotensin may play an endocrine or paracrine role in the regulation of fat metabolism. It causes contraction of smooth muscle. The protein is Neurotensin/neuromedin N (NTS) of Homo sapiens (Human).